The following is a 168-amino-acid chain: Pathogenesis-related protein 1A (168 aa).

The N-terminal stretch at 1–30 is a signal peptide; the sequence is MGFVLFSQLPSFLLVSTLLLFLVISHSCRA. In terms of domain architecture, SCP spans 38-156; the sequence is LDAHNTARAD…NGGYVVSCNY (119 aa).

This sequence belongs to the CRISP family. Three disulfide bonds are present.

The protein localises to the vacuole. Probably involved in the defense reaction of plants against pathogens. This chain is Pathogenesis-related protein 1A, found in Nicotiana tabacum (Common tobacco).